A 323-amino-acid polypeptide reads, in one-letter code: Beta-ketoacyl-[acyl-carrier-protein] synthase III (323 aa).

Active-site residues include Cys113 and His250. The ACP-binding stretch occupies residues Gln251 to Arg255. Asn280 is an active-site residue.

Belongs to the thiolase-like superfamily. FabH family. In terms of assembly, homodimer.

Its subcellular location is the cytoplasm. It carries out the reaction malonyl-[ACP] + acetyl-CoA + H(+) = 3-oxobutanoyl-[ACP] + CO2 + CoA. It functions in the pathway lipid metabolism; fatty acid biosynthesis. Its function is as follows. Catalyzes the condensation reaction of fatty acid synthesis by the addition to an acyl acceptor of two carbons from malonyl-ACP. Catalyzes the first condensation reaction which initiates fatty acid synthesis and may therefore play a role in governing the total rate of fatty acid production. Possesses both acetoacetyl-ACP synthase and acetyl transacylase activities. Its substrate specificity determines the biosynthesis of branched-chain and/or straight-chain of fatty acids. In Rhizobium meliloti (strain 1021) (Ensifer meliloti), this protein is Beta-ketoacyl-[acyl-carrier-protein] synthase III.